The primary structure comprises 174 residues: Peptide deformylase (174 aa).

Residues C96 and H138 each contribute to the Fe cation site. E139 is a catalytic residue. Position 142 (H142) interacts with Fe cation.

It belongs to the polypeptide deformylase family. The cofactor is Fe(2+).

The enzyme catalyses N-terminal N-formyl-L-methionyl-[peptide] + H2O = N-terminal L-methionyl-[peptide] + formate. Removes the formyl group from the N-terminal Met of newly synthesized proteins. Requires at least a dipeptide for an efficient rate of reaction. N-terminal L-methionine is a prerequisite for activity but the enzyme has broad specificity at other positions. This chain is Peptide deformylase, found in Nautilia profundicola (strain ATCC BAA-1463 / DSM 18972 / AmH).